The sequence spans 486 residues: Cardiolipin synthase A (486 aa).

2 consecutive transmembrane segments (helical) span residues 3 to 23 (TFYT…IAGV) and 38 to 58 (MAWL…YLSF). PLD phosphodiesterase domains follow at residues 219–246 (MDLR…VDPR) and 399–426 (EGGL…DMRS). Residues histidine 224, lysine 226, aspartate 231, histidine 404, lysine 406, and aspartate 411 contribute to the active site.

Belongs to the phospholipase D family. Cardiolipin synthase subfamily. ClsA sub-subfamily.

It is found in the cell inner membrane. The catalysed reaction is 2 a 1,2-diacyl-sn-glycero-3-phospho-(1'-sn-glycerol) = a cardiolipin + glycerol. Catalyzes the reversible phosphatidyl group transfer from one phosphatidylglycerol molecule to another to form cardiolipin (CL) (diphosphatidylglycerol) and glycerol. The sequence is that of Cardiolipin synthase A from Yersinia pseudotuberculosis serotype O:3 (strain YPIII).